A 485-amino-acid polypeptide reads, in one-letter code: Cytolytic protein enterolobin (485 aa).

Disulfide bonds link Cys-34–Cys-98 and Cys-183–Cys-189.

This sequence belongs to the aerolysin family. As to quaternary structure, oligomerizes as a hexamer. The N-terminus is blocked.

In terms of biological role, cytolytic protein with insecticidal activity. Acts as a pro-inflammatory agent. The sequence is that of Cytolytic protein enterolobin from Enterolobium contortisiliquum (Pacara earpod tree).